Consider the following 156-residue polypeptide: ATP synthase subunit b (156 aa).

A helical transmembrane segment spans residues 7-29 (LLGQAISFAMFVWFCMKYVWPPI).

The protein belongs to the ATPase B chain family. F-type ATPases have 2 components, F(1) - the catalytic core - and F(0) - the membrane proton channel. F(1) has five subunits: alpha(3), beta(3), gamma(1), delta(1), epsilon(1). F(0) has three main subunits: a(1), b(2) and c(10-14). The alpha and beta chains form an alternating ring which encloses part of the gamma chain. F(1) is attached to F(0) by a central stalk formed by the gamma and epsilon chains, while a peripheral stalk is formed by the delta and b chains.

It localises to the cell inner membrane. In terms of biological role, f(1)F(0) ATP synthase produces ATP from ADP in the presence of a proton or sodium gradient. F-type ATPases consist of two structural domains, F(1) containing the extramembraneous catalytic core and F(0) containing the membrane proton channel, linked together by a central stalk and a peripheral stalk. During catalysis, ATP synthesis in the catalytic domain of F(1) is coupled via a rotary mechanism of the central stalk subunits to proton translocation. Component of the F(0) channel, it forms part of the peripheral stalk, linking F(1) to F(0). The polypeptide is ATP synthase subunit b (Vibrio vulnificus (strain CMCP6)).